Consider the following 729-residue polypeptide: Fatty acid oxidation complex subunit alpha (729 aa).

An enoyl-CoA hydratase/isomerase region spans residues 1–189 (MLYKGDTLYL…KIGLVDGVVK (189 aa)). Asp296 serves as a coordination point for substrate. Residues 311 to 729 (ETPKQAAVLG…ARPVGSLKTA (419 aa)) form a 3-hydroxyacyl-CoA dehydrogenase region. NAD(+)-binding positions include Met324, Asp343, 400–402 (VVE), Lys407, and Ser429. His450 functions as the For 3-hydroxyacyl-CoA dehydrogenase activity in the catalytic mechanism. Asn453 contacts NAD(+). Residues Asn500 and Tyr660 each contribute to the substrate site. The disordered stretch occupies residues 708–729 (RHNEPYYPPVEPARPVGSLKTA).

This sequence in the N-terminal section; belongs to the enoyl-CoA hydratase/isomerase family. The protein in the C-terminal section; belongs to the 3-hydroxyacyl-CoA dehydrogenase family. In terms of assembly, heterotetramer of two alpha chains (FadB) and two beta chains (FadA).

The enzyme catalyses a (3S)-3-hydroxyacyl-CoA + NAD(+) = a 3-oxoacyl-CoA + NADH + H(+). It catalyses the reaction a (3S)-3-hydroxyacyl-CoA = a (2E)-enoyl-CoA + H2O. It carries out the reaction a 4-saturated-(3S)-3-hydroxyacyl-CoA = a (3E)-enoyl-CoA + H2O. The catalysed reaction is (3S)-3-hydroxybutanoyl-CoA = (3R)-3-hydroxybutanoyl-CoA. The enzyme catalyses a (3Z)-enoyl-CoA = a 4-saturated (2E)-enoyl-CoA. It catalyses the reaction a (3E)-enoyl-CoA = a 4-saturated (2E)-enoyl-CoA. It functions in the pathway lipid metabolism; fatty acid beta-oxidation. Involved in the aerobic and anaerobic degradation of long-chain fatty acids via beta-oxidation cycle. Catalyzes the formation of 3-oxoacyl-CoA from enoyl-CoA via L-3-hydroxyacyl-CoA. It can also use D-3-hydroxyacyl-CoA and cis-3-enoyl-CoA as substrate. The protein is Fatty acid oxidation complex subunit alpha of Salmonella choleraesuis (strain SC-B67).